Consider the following 1134-residue polypeptide: Envelopment polyprotein (1134 aa).

The first 18 residues, M1–T18, serve as a signal peptide directing secretion. Over L19 to L487 the chain is Lumenal. 8 cysteine pairs are disulfide-bonded: C29-C151, C63-C157, C109-C128, C133-C138, C175-C185, C210-C247, C234-C351, and C380-C389. N134 is a glycosylation site (N-linked (GlcNAc...) asparagine; by host). Residues N235 and N347 are each glycosylated (N-linked (GlcNAc...) asparagine; by host). A glycan (N-linked (GlcNAc...) asparagine; by host) is linked at N399. Cystine bridges form between C405-C424 and C452-C475. A helical transmembrane segment spans residues L488–I508. The Cytoplasmic portion of the chain corresponds to L509–C627. The segment at F516–K533 is binding to the ribonucleoprotein. CCHC-type zinc fingers lie at residues C545 to C565 and C570 to C591. Binding to the ribonucleoprotein regions lie at residues Y588–V605, Q592–K603, and T611–S625. Residues T611–I634 enclose the ITAM domain. The short motif at Y615–L618 is the YxxL element. Residues Y628–A648 form a helical membrane-spanning segment. The Lumenal portion of the chain corresponds to S649 to N1104. 7 disulfides stabilise this stretch: C734-C769, C738-C776, C750-C884, C764-C895, C779-C903, C805-C814, and C822-C831. The interval Y756–C776 is fusion loop. N927 is a glycosylation site (N-linked (GlcNAc...) asparagine; by host). 5 disulfides stabilise this stretch: C969–C999, C992–C1044, C1009–C1014, C1045–C1050, and C1084–C1088. The helical transmembrane segment at W1105–L1125 threads the bilayer. Positions L1121 to S1134 are binding to the ribonucleoprotein. Residues C1126 to S1134 are Cytoplasmic-facing.

Belongs to the hantavirus envelope glycoprotein family. As to quaternary structure, homodimer. Homotetramer; forms heterotetrameric Gn-Gc spikes in the pre-fusion conformation. Interacts (via C-terminus) with the nucleoprotein. Interacts with host TUFM; this interaction contributes to the virus-induced degradation of mitochondria by autophagy, which leads to degradation of host MAVS and inhibition of type I interferon (IFN) responses. Interacts with host MAP1LC3B; this interaction contributes to the virus-induced degradation of mitochondria by autophagy, which leads to degradation of host MAVS and inhibition of type I interferon (IFN) responses. In terms of assembly, homodimer. Homotetramer; forms heterotetrameric Gn-Gc spikes in the pre-fusion conformation. Homotrimer; forms homotrimer in the post-fusion conformation at acidic pH. Interacts (via C-terminus) with the nucleoprotein. Post-translationally, envelope polyprotein precursor is quickly cleaved in vivo just after synthesis, presumably by host signal peptidase.

The protein resides in the virion membrane. It localises to the host cell surface. It is found in the host Golgi apparatus membrane. The protein localises to the host endoplasmic reticulum membrane. Its subcellular location is the host mitochondrion. In terms of biological role, forms homotetramers with glycoprotein C at the surface of the virion. Attaches the virion to host cell receptors including integrin ITGAV/ITGB3. This attachment induces virion internalization predominantly through clathrin-dependent endocytosis. May also bind to host C1QBP for virus entry into the host cell. Mediates the assembly and budding of infectious virus particles through its interaction with the nucleocapsid protein and the viral genome. May dysregulate normal immune and endothelial cell responses through an ITAM motif. Translocates to mitochondria, binds to host TUFM and recruits MAP1LC3B. These interactions induce mitochondrial autophagy and therefore destruction of host MAVS leading to inhibition of type I interferon (IFN) responses. Concomitant breakdown of glycoprotein N is apparently prevented by the nucleoprotein that may inhibit Gn-stimulated autophagosome-lysosome fusion. Interacts with the viral genomic RNA. Forms homotetramers with glycoprotein N at the surface of the virion. Attaches the virion to host cell receptors including integrin ITGAV/ITGB3. This attachment induces virion internalization predominantly through clathrin-dependent endocytosis. May also bind to host C1QBP for virus entry into the host cell. Class II fusion protein that promotes fusion of viral membrane with host endosomal membrane after endocytosis of the virion. This Apodemus agrarius (Eurasian field mouse) protein is Envelopment polyprotein (GP).